A 458-amino-acid polypeptide reads, in one-letter code: Phosphoglucosamine mutase (458 aa).

Catalysis depends on serine 102, which acts as the Phosphoserine intermediate. Mg(2+) is bound by residues serine 102, aspartate 252, aspartate 254, and aspartate 256. The residue at position 102 (serine 102) is a Phosphoserine.

The protein belongs to the phosphohexose mutase family. Mg(2+) is required as a cofactor. In terms of processing, activated by phosphorylation.

The enzyme catalyses alpha-D-glucosamine 1-phosphate = D-glucosamine 6-phosphate. Its function is as follows. Catalyzes the conversion of glucosamine-6-phosphate to glucosamine-1-phosphate. The protein is Phosphoglucosamine mutase of Anaeromyxobacter dehalogenans (strain 2CP-C).